The sequence spans 1269 residues: MVRLREIPRTAAFAWSPDTSAPIVVTGTRAGAVDADFSDETKLELWDLKLDDEGQGLELQPIASISADSRFFDIAWGPPNEDHPRGIIAGALENGSLDLWDAEKLLSGASDAHMSRTTKHTGAIKSLQFNPLKPQILATAGTKGELFIYDVNDISNPFRLGTAAARSDDLECVAWNRKVPHILATGGSGGFVTVWDLKTRKASLTLNNSRKAVSAIAWDPNNSTKLLTATPDDTMPVIFLWDLRNSNAPERTLQGHEQGVLSVSWCQQDSDLLISCGKDNRTIVWNPQTGERYGEFPEVTNWTFSARFNPTNPNLSATASFDGKITIQTLQNTNPSATQAAAQNSLDGEDFFTKAQTQPQGASFTLTKAPLWYQRPVGASFGFGGKVVVFKQTQTAPGQPRASEISISHFSVDSEIGSATEKFEESIKAGDLKSICQSHLENAKSEDETTAWKVMETLVAENPRKQVVEYLGLSAEEAPASPESTTEEGAEKEDAEVEPVKESFKKHKKNRLSTFFTEGGDGDDFLAGLAATKGAKTDSPFHLLREGNTGLEDSVTRAIMLGNFAKAVEICIKADRIADAFLIANCGGKELVDQVQTAYISAKKGSPSYLRLLGSVINDNLWDVVYNADIADWKETMATLCTFAKPEEFPDLCEALGDRLFETGSRQDASFCFLVGSKLEKVVGIWIDALEEAEKNEIQEAEADNTFSVHARSLQQLIEKVTVFRHVTKFQDAEASKTSDWKLASLYDKYIEYADIVAAHGQLSIAQKYLELVPASYSGAEVARKRLQLATTKSGAQPAAARAQQAPAAARLPTRQQPVGYQPPQQQPMSTPYGMPPAPQAQTPAANPYGPPAPSPYAPAGATPYQPQQTSYAPPQPAGGAGAYGPTPGVGYGQPQQNFGAPPPPRNATPSALPPSRTVDAGSWNDVPMVTKAPPPRRSTPSVAPVPSPFANQQAGMAPPPQSPYLGQRGTATPPPPPPKAGQGPPRMASPLTSPPQAGYGGAAPPRPASAASSTYAPPPPAPGQSFGMNAPPARTASPYSVAPAAPPPSNRYAPSPAMQQQQGGPGPAGSMPPPPAMSRPPPTNPYAAAPQQSPAPGGQYAPSPYGAPPQAGQPPMAPPPSSQVGPPPGGRGPLSTPTPPPPRAAAAPPAKTKYPPGDRSHIPASAQQLVEILSRDMERVAAKAPASFAPHVKDTQKRLNYLFDHLNNEELVKPDTIGQLNTLAQAIEAKDYAGAQQLQIKIQTEKTEECGQWIVGVKRLISMSKATP.

7 WD repeats span residues 5–47 (REIP…ELWD), 66–110 (SADS…SGAS), 119–159 (KHTG…NPFR), 165–205 (ARSD…ASLT), 208–251 (NSRK…APER), 255–295 (GHEQ…RYGE), and 298–338 (EVTN…PSAT). One copy of the WD 8; interaction with SEC13 repeat lies at 380–408 (SFGFGGKVVVFKQTQTAPGQPRASEISIS). Disordered regions lie at residues 474–503 (SAEE…VKES) and 792–1162 (TKSG…DRSH). The segment covering 485–497 (TTEEGAEKEDAEV) has biased composition (acidic residues). A compositionally biased stretch (low complexity) spans 796 to 828 (AQPAAARAQQAPAAARLPTRQQPVGYQPPQQQP). A compositionally biased stretch (gly residues) spans 879–892 (GGAGAYGPTPGVGY). The span at 933–948 (APPPRRSTPSVAPVPS) shows a compositional bias: pro residues. Residues 1054–1063 (APSPAMQQQQ) show a composition bias toward low complexity. Residues 1071–1085 (SMPPPPAMSRPPPTN) show a composition bias toward pro residues. Positions 1086 to 1105 (PYAAAPQQSPAPGGQYAPSP) are enriched in low complexity. Pro residues predominate over residues 1106–1144 (YGAPPQAGQPPMAPPPSSQVGPPPGGRGPLSTPTPPPPR). Residues 1145 to 1156 (AAAAPPAKTKYP) show a composition bias toward low complexity.

It belongs to the WD repeat SEC31 family. The COPII coat is composed of at least 5 proteins: the SEC23/24 complex, the SEC13/31 complex, and the protein SAR1. SEC13 and SEC31 make a 2:2 tetramer that forms the edge element of the COPII outer coat. The tetramer self-assembles in multiple copies to form the complete polyhedral cage. Interacts (via WD 8) with SEC13.

Its subcellular location is the cytoplasmic vesicle. It is found in the COPII-coated vesicle membrane. The protein localises to the endoplasmic reticulum membrane. Its function is as follows. Component of the coat protein complex II (COPII) which promotes the formation of transport vesicles from the endoplasmic reticulum (ER). The coat has two main functions, the physical deformation of the endoplasmic reticulum membrane into vesicles and the selection of cargo molecules. This is Protein transport protein SEC31 (SEC31) from Pyricularia oryzae (strain 70-15 / ATCC MYA-4617 / FGSC 8958) (Rice blast fungus).